A 301-amino-acid polypeptide reads, in one-letter code: Acetyl-coenzyme A carboxylase carboxyl transferase subunit beta (301 aa).

In terms of domain architecture, CoA carboxyltransferase N-terminal spans 25–294 (LWIKDPSTGE…NSDAPAPQKP (270 aa)).

Belongs to the AccD/PCCB family. In terms of assembly, acetyl-CoA carboxylase is a heterohexamer composed of biotin carboxyl carrier protein (AccB), biotin carboxylase (AccC) and two subunits each of ACCase subunit alpha (AccA) and ACCase subunit beta (AccD).

It localises to the cytoplasm. The catalysed reaction is N(6)-carboxybiotinyl-L-lysyl-[protein] + acetyl-CoA = N(6)-biotinyl-L-lysyl-[protein] + malonyl-CoA. The protein operates within lipid metabolism; malonyl-CoA biosynthesis; malonyl-CoA from acetyl-CoA: step 1/1. In terms of biological role, component of the acetyl coenzyme A carboxylase (ACC) complex. Biotin carboxylase (BC) catalyzes the carboxylation of biotin on its carrier protein (BCCP) and then the CO(2) group is transferred by the transcarboxylase to acetyl-CoA to form malonyl-CoA. This Brucella canis (strain ATCC 23365 / NCTC 10854 / RM-666) protein is Acetyl-coenzyme A carboxylase carboxyl transferase subunit beta.